The sequence spans 150 residues: Ribonuclease H (150 aa).

One can recognise an RNase H type-1 domain in the interval 1 to 142 (MSDSVEIFTD…ADQLANRGVD (142 aa)). Mg(2+) contacts are provided by D10, E48, D70, and D134.

It belongs to the RNase H family. As to quaternary structure, monomer. Requires Mg(2+) as cofactor.

Its subcellular location is the cytoplasm. The enzyme catalyses Endonucleolytic cleavage to 5'-phosphomonoester.. In terms of biological role, endonuclease that specifically degrades the RNA of RNA-DNA hybrids. This chain is Ribonuclease H, found in Pseudomonas fluorescens (strain ATCC BAA-477 / NRRL B-23932 / Pf-5).